A 552-amino-acid chain; its full sequence is BAR/IMD domain-containing adapter protein 2 (552 aa).

One can recognise an IMD domain in the interval 1 to 250; sequence MSLSRSEEMH…VQLMQQVASN (250 aa). The stretch at 132–153 forms a coiled coil; sequence DALDKCQAELKKLRKKSQGSKN. At serine 261 the chain carries Phosphoserine. The tract at residues 295–369 is disordered; that stretch reads STPIMNGVTG…TLPRSSSMAA (75 aa). At threonine 296 the chain carries Phosphothreonine. Over residues 320 to 334 the composition is skewed to low complexity; it reads QPKSLSPPQSQSKLS. Phosphoserine occurs at positions 323, 325, and 336. Threonine 340 carries the phosphothreonine modification. Serine 346 is subject to Phosphoserine. The segment covering 348–367 has biased composition (polar residues); the sequence is TPKNSYATTENKTLPRSSSM. Position 360 is a phosphothreonine (threonine 360). A phosphoserine mark is found at serine 366, serine 384, serine 395, and serine 454. Positions 374 to 437 constitute an SH3 domain; that stretch reads NGRMRVKAIF…PFSYTRVLDS (64 aa). The segment covering 447–457 has biased composition (polar residues); the sequence is LQQGKSSSTGN. Disordered stretches follow at residues 447-466 and 525-552; these read LQQG…DLAI and TNDR…LAGR.

Homodimer. Interacts with CDC42 and RAC1 that have been activated by GTP binding. Interacts with ATN1, ADGRB1, EPS8, SHANK1, SHANK2, SHANK3, WASF1 and WASF2. Interacts with ENAH after recruitment of CDC42. Interacts with TIAM1 and DIAPH1. Interacts (via SH3 domain) with E.coli effector protein EspF(U) (via PXXP motifs). Interacts with E.coli intimin receptor Tir. Post-translationally, phosphorylated on tyrosine residues by INSR in response to insulin treatment. As to expression, isoform 1 and isoform 4 are expressed almost exclusively in brain. Isoform 4 is barely detectable in placenta, prostate and testis. A short isoform is ubiquitous, with the highest expression in liver, prostate, testis and placenta.

It is found in the cytoplasm. It localises to the membrane. The protein localises to the cell projection. The protein resides in the filopodium. Its subcellular location is the ruffle. It is found in the cytoskeleton. Its function is as follows. Adapter protein that links membrane-bound small G-proteins to cytoplasmic effector proteins. Necessary for CDC42-mediated reorganization of the actin cytoskeleton and for RAC1-mediated membrane ruffling. Involved in the regulation of the actin cytoskeleton by WASF family members and the Arp2/3 complex. Plays a role in neurite growth. Acts syngeristically with ENAH to promote filipodia formation. Plays a role in the reorganization of the actin cytoskeleton in response to bacterial infection. Participates in actin bundling when associated with EPS8, promoting filopodial protrusions. The protein is BAR/IMD domain-containing adapter protein 2 (BAIAP2) of Homo sapiens (Human).